The following is a 277-amino-acid chain: Anamorsin homolog (277 aa).

The N-terminal SAM-like domain stretch occupies residues 1–160; that stretch reads MDTKRMLQNS…NIGSSFALKK (160 aa). A linker region spans residues 161 to 188; it reads SIKSPVKVQNDDYSDLIDEDSLLTEEDL. 4 residues coordinate [2Fe-2S] cluster: Cys199, Cys208, Cys211, and Cys213. Residues 199 to 213 form a fe-S binding site A region; it reads CEVGSTRKACKNCTC. [4Fe-4S] cluster is bound by residues Cys238, Cys241, Cys249, and Cys252. 2 consecutive short sequence motifs (cx2C motif) follow at residues 238 to 241 and 249 to 252; these read CGSC and CGTC. The fe-S binding site B stretch occupies residues 238–252; sequence CGSCGLGDAFRCGTC.

It belongs to the anamorsin family. In terms of assembly, monomer. [2Fe-2S] cluster is required as a cofactor. It depends on [4Fe-4S] cluster as a cofactor.

It localises to the cytoplasm. Its subcellular location is the mitochondrion intermembrane space. In terms of biological role, component of the cytosolic iron-sulfur (Fe-S) protein assembly (CIA) machinery. Required for the maturation of extramitochondrial Fe-S proteins. Part of an electron transfer chain functioning in an early step of cytosolic Fe-S biogenesis, facilitating the de novo assembly of a [4Fe-4S] cluster on the cytosolic Fe-S scaffold complex. Electrons are transferred from NADPH via a FAD- and FMN-containing diflavin oxidoreductase. Together with the diflavin oxidoreductase, also required for the assembly of the diferric tyrosyl radical cofactor of ribonucleotide reductase (RNR), probably by providing electrons for reduction during radical cofactor maturation in the catalytic small subunit. The sequence is that of Anamorsin homolog from Populus trichocarpa (Western balsam poplar).